Consider the following 92-residue polypeptide: Acylphosphatase (92 aa).

The Acylphosphatase-like domain occupies 5-92 (CIAAYVYGVV…ADFQGFSIRY (88 aa)). Residues Arg20 and Asn38 contribute to the active site.

The protein belongs to the acylphosphatase family.

It carries out the reaction an acyl phosphate + H2O = a carboxylate + phosphate + H(+). The chain is Acylphosphatase (acyP) from Serratia proteamaculans (strain 568).